Consider the following 79-residue polypeptide: U-myrmeciitoxin(01)-Mg9a (79 aa).

The N-terminal stretch at 1–21 (MKLSCLLLTLAIIFVLTIVHA) is a signal peptide. Positions 22-48 (PNVEAKALANPESDAIGFADAVGEADP) are excised as a propeptide. Position 78 is a glutamine amide (Q78).

In terms of tissue distribution, expressed by the venom gland.

It is found in the secreted. Functionally, may have antimicrobial properties, like most ant linear peptides. The polypeptide is U-myrmeciitoxin(01)-Mg9a (Myrmecia gulosa (Red bulldog ant)).